The following is a 280-amino-acid chain: Lacto-N-neotetraose biosynthesis glycosyltransferase LgtE (280 aa).

It belongs to the glycosyltransferase 25 family.

It participates in glycan metabolism; lacto-N-neotetraose biosynthesis. The protein operates within bacterial outer membrane biogenesis; lipooligosaccharide biosynthesis. Adds the first galactose to the lacto-N-tetraose chain in lipooligosaccharide (LOS). This Neisseria meningitidis serogroup B (strain ATCC BAA-335 / MC58) protein is Lacto-N-neotetraose biosynthesis glycosyltransferase LgtE (lgtE).